Consider the following 340-residue polypeptide: Ribose-phosphate pyrophosphokinase (340 aa).

Residues 47–49 (NGE) and 106–107 (RQ) each bind ATP. Positions 140 and 182 each coordinate Mg(2+). Lys206 is a catalytic residue. D-ribose 5-phosphate contacts are provided by residues Arg208, Asp234, and 238–242 (DTAGT).

Belongs to the ribose-phosphate pyrophosphokinase family. Class I subfamily. As to quaternary structure, homohexamer. Requires Mg(2+) as cofactor.

The protein localises to the cytoplasm. It catalyses the reaction D-ribose 5-phosphate + ATP = 5-phospho-alpha-D-ribose 1-diphosphate + AMP + H(+). It participates in metabolic intermediate biosynthesis; 5-phospho-alpha-D-ribose 1-diphosphate biosynthesis; 5-phospho-alpha-D-ribose 1-diphosphate from D-ribose 5-phosphate (route I): step 1/1. Involved in the biosynthesis of the central metabolite phospho-alpha-D-ribosyl-1-pyrophosphate (PRPP) via the transfer of pyrophosphoryl group from ATP to 1-hydroxyl of ribose-5-phosphate (Rib-5-P). The chain is Ribose-phosphate pyrophosphokinase from Bifidobacterium longum (strain NCC 2705).